The primary structure comprises 131 residues: Sec-independent protein translocase protein TatB (131 aa).

Residues F2–G22 traverse the membrane as a helical segment. Residues L86–R95 are compositionally biased toward polar residues. Positions L86 to G131 are disordered. The segment covering T115–G131 has biased composition (low complexity).

This sequence belongs to the TatB family. The Tat system comprises two distinct complexes: a TatABC complex, containing multiple copies of TatA, TatB and TatC subunits, and a separate TatA complex, containing only TatA subunits. Substrates initially bind to the TatABC complex, which probably triggers association of the separate TatA complex to form the active translocon.

Its subcellular location is the cell inner membrane. In terms of biological role, part of the twin-arginine translocation (Tat) system that transports large folded proteins containing a characteristic twin-arginine motif in their signal peptide across membranes. Together with TatC, TatB is part of a receptor directly interacting with Tat signal peptides. TatB may form an oligomeric binding site that transiently accommodates folded Tat precursor proteins before their translocation. The polypeptide is Sec-independent protein translocase protein TatB (Shewanella halifaxensis (strain HAW-EB4)).